A 718-amino-acid chain; its full sequence is Putative aminodeoxychorismate synthase (718 aa).

Positions 9 to 203 constitute a Glutamine amidotransferase type-1 domain; the sequence is QILLIDCYDS…LSLADTPNIQ (195 aa). Cys88 acts as the Nucleophile in catalysis. Residues His177 and Glu179 contribute to the active site. The tract at residues 266–718 is PABB component; that stretch reads FLDSAKKPGR…NLKNKKRSCK (453 aa).

In the C-terminal section; belongs to the anthranilate synthase component I family.

The protein localises to the cytoplasm. It localises to the nucleus. The catalysed reaction is chorismate + L-glutamine = 4-amino-4-deoxychorismate + L-glutamate. Its pathway is cofactor biosynthesis; tetrahydrofolate biosynthesis; 4-aminobenzoate from chorismate: step 1/2. Catalyzes the biosynthesis of 4-amino-4-deoxychorismate (ADC) from chorismate and glutamine. Required for the synthesis of 4-aminobenzoate (PABA), an important component in tetrahydrofolate biosynthesis. The chain is Putative aminodeoxychorismate synthase from Schizosaccharomyces pombe (strain 972 / ATCC 24843) (Fission yeast).